The chain runs to 397 residues: MEIGTPLFEGAKKLLWLGGGELGKEMVIEAQRMGIETVVVDRYDMAPAMHVAHRKYVVNMLDGNAIKSIIKKENPDAIITEIEAINTDALLELESEGYKVIPNAKAVKICMNRIELRKLAAEKVKVPTTQYGFAENPEEVKKICKDIGYPCIIKPEMSSSGHGHEVVYNESEVEQKFKEAITHARGKSEQVIVEEYVKIDRELTVLTYRYLDDKGVVTKTITPIEHQRPSDVYYYVESWHPSTVDKDIIERAQEYATRVVNELGGFGIFGVEIIVSGNRVLFSEVSPRPHDTGLVTMASLDINEFQIHVRSALGLPTPEVKIVSPAAAHVILANNEGWAPKFLNVEKALQIPGVQIRLFGKPSTYYKRRMGVVLATGNTVEEAKEKARKAASLVLVT.

N(1)-(5-phospho-beta-D-ribosyl)glycinamide is bound by residues 21–22 (EL) and Glu81. ATP contacts are provided by residues Arg113, Lys154, 194 to 197 (EEYV), and Glu202. In terms of domain architecture, ATP-grasp spans 118 to 313 (KLAAEKVKVP…EFQIHVRSAL (196 aa)). The Mg(2+) site is built by Glu272 and Glu284. Residues Asp291, Lys361, and 368–369 (RR) contribute to the N(1)-(5-phospho-beta-D-ribosyl)glycinamide site.

Belongs to the PurK/PurT family. As to quaternary structure, homodimer.

The catalysed reaction is N(1)-(5-phospho-beta-D-ribosyl)glycinamide + formate + ATP = N(2)-formyl-N(1)-(5-phospho-beta-D-ribosyl)glycinamide + ADP + phosphate + H(+). It participates in purine metabolism; IMP biosynthesis via de novo pathway; N(2)-formyl-N(1)-(5-phospho-D-ribosyl)glycinamide from N(1)-(5-phospho-D-ribosyl)glycinamide (formate route): step 1/1. Functionally, involved in the de novo purine biosynthesis. Catalyzes the transfer of formate to 5-phospho-ribosyl-glycinamide (GAR), producing 5-phospho-ribosyl-N-formylglycinamide (FGAR). Formate is provided by PurU via hydrolysis of 10-formyl-tetrahydrofolate. The protein is Formate-dependent phosphoribosylglycinamide formyltransferase of Sulfurisphaera tokodaii (strain DSM 16993 / JCM 10545 / NBRC 100140 / 7) (Sulfolobus tokodaii).